An 856-amino-acid polypeptide reads, in one-letter code: Protein translocase subunit SecA (856 aa).

Residues Q77, 95–99 (GEGKT), and D534 each bind ATP.

This sequence belongs to the SecA family. In terms of assembly, monomer and homodimer. Part of the essential Sec protein translocation apparatus which comprises SecA, SecYEG and auxiliary proteins SecDF. Other proteins may also be involved.

It localises to the cell inner membrane. It is found in the cytoplasm. The catalysed reaction is ATP + H2O + cellular proteinSide 1 = ADP + phosphate + cellular proteinSide 2.. Its function is as follows. Part of the Sec protein translocase complex. Interacts with the SecYEG preprotein conducting channel. Has a central role in coupling the hydrolysis of ATP to the transfer of proteins into and across the cell membrane, serving as an ATP-driven molecular motor driving the stepwise translocation of polypeptide chains across the membrane. In Thermosipho africanus (strain TCF52B), this protein is Protein translocase subunit SecA.